The primary structure comprises 185 residues: Alkyl hydroperoxide reductase AhpD (185 aa).

Cys-131 (proton donor) is an active-site residue. The cysteines at positions 131 and 134 are disulfide-linked. The Cysteine sulfenic acid (-SOH) intermediate role is filled by Cys-134.

This sequence belongs to the AhpD family. In terms of assembly, homotrimer.

The enzyme catalyses N(6)-[(R)-dihydrolipoyl]-L-lysyl-[lipoyl-carrier protein] + a hydroperoxide = N(6)-[(R)-lipoyl]-L-lysyl-[lipoyl-carrier protein] + an alcohol + H2O. Its function is as follows. Antioxidant protein with alkyl hydroperoxidase activity. Required for the reduction of the AhpC active site cysteine residues and for the regeneration of the AhpC enzyme activity. This chain is Alkyl hydroperoxide reductase AhpD, found in Frankia alni (strain DSM 45986 / CECT 9034 / ACN14a).